We begin with the raw amino-acid sequence, 1088 residues long: MAAAAGDVEAFLAACQASGDAAYGAAKAVLERLEAPATRAEARRLLGAVRRRFAAGGPAAGLECFRTFHFRIHDVVLDPHLQGFQQRKKLTMMEIPSIFIPEDWSFTFYEGLNRHPDSIFRDKTVAELGCGNGWISIALAEKWCPSKVYGLDINPRPIKIAWINLYLNALDDDGLPIYDAEGKTLLDRVEFYESDLLSYCRDNKIELDRIVGCIPQILNPNPEAMSKIVTENSSEEFLYSLSNYCALQGFVEDQFGLGLIARAVEEGISVIKPSGLMVFNMGGRPGQGVCERLFLRRGFRINKLWQTKIMQAADTDISALVEIEKNSRHRFEFFMDLVGDQPVCARTAWAYMKSGGRISHALSVYSCQLRQPNQVKKIFEFLKDGFHEVSSSLDLSFDDDSVADEKIPFLAYLASFLQENKSNPCEPPAGCLNFRNLVAGFMKSYHHIPLTPDNVVVFPSRAVAIENALRLFSPGLAIVDEHLTRHLPKQWLTSLAIEESNHAKDTVTVIEAPRQSDLLIELIRKLKPQVVVTGMAQFEAITSAAFVNLLSVTKDVGSRLLLDISEHLELSSLPSSNGVLKYLAGKTLPSHAAILCGLVKNQVYSDLEVAFAISEDPTVYKALSQTIELLEGHTSVISQHYYGCLFHELLAFQIGDRHPQQEREPAEVISKEMIGFSSSAMSTLEGAEFFVPGSMESGVIHMDLDRSFLPVPSAVNASIFESFVRQNITDSETDVRSSIQQLVKDSYGFSAGGASEIIYGNTCLALFNKLVLCCMQEQGTLLFPLGTNGHYVNAAKFVNATTLTIPTKADSGFKIEPSALADTLEKVSQPWVYISGPTINPTGFLYSDDDIAELLSVCATYGARVVIDTSSSGLEFQATGCSQWNLERCLSNVKSSKPSFSVVLLGELSFELTTAGLDFGFLIMSDSSLVDTFYSFPSLSRPHSTLKYTFRKLLGLKNQKDQHFSDLILEQKETLKNRADQLIKMLESCGWDAVGCHGGISMLAKPTAYIGKSLKVDGFEGKLDSHNMREALLRSTGLCISSSGWTGVPDYCRFSFALESGDFDRAMECIARFRELVLGGGAKVNGSN.

Belongs to the class I-like SAM-binding methyltransferase superfamily. In terms of assembly, homotetramer. As to expression, expressed in the shoot, scutellum, and aleurone cells but not in the root or endosperm.

The protein resides in the cytoplasm. It catalyses the reaction L-methionine + S-adenosyl-L-methionine = S-methyl-L-methionine + S-adenosyl-L-homocysteine. Its function is as follows. Catalyzes the S-methylmethionine (SMM) biosynthesis from adenosyl-L-homocysteine (AdoMet) and methionine. SMM biosynthesis (by MMT1) and degradation (by HMT-1, HMT-2 and HMT-3) constitute the SMM cycle in plants, which is probably required to achieve short term control of AdoMet level. Also able to catalyze the selenium-methylmethionine (SeMM) from AdoMet and selenium-methionine (SeMet). May play a role in phoem sulfur transport; such function is however not essential. This is Methionine S-methyltransferase (MMT1) from Hordeum vulgare (Barley).